Reading from the N-terminus, the 774-residue chain is MQTVIQNPNWWRRRNKLEKSLLVSLGIMFVVLATGFGLWIGKVLRTSPPSNPQATALHGDSTTINQVPTGTASKGKSGDSGDVCLTQECIHTASTVLRKMKPEVEPCDNFYEFACGTYLEEENIPDDKVSISTFSVISDKLQEQLKDIITAERPETEPKHFRLPNLLYKACMNKTLIETLGPEPITRVAERLGGWPLIKGDSWNADDSWTWQEQVKKFRTAGFSMDYIIDFSIGVDLQNSTKRLIDLDQSSLALSREYLVKGFNETLVTAYYKYMVDIAVLFGANRDLAKTELLLSLEFEMALANISWPNEKRRNSSELYNLRTPAQLQAAYPYVQWVDYMNALLPEGLNVAEDEMINLSVPSFFEDLGKLLAKTPKRVIANYMFWRIHGFSVGFLSEEFRKRQLQYATALSGRQEQEARWKECVDIATSSMDEVCEDDFDSLGISVGSLYVGKHFHKDSKANALEMVNEIRNVFNDILDEVNWMDAKTKKEAKLKLHSMATHIGYPDEMLDNEKLAAYYAKLDIDPDKYFESFLGMNIFGTDYSFNKLRLPVNKTDWVRHARPAIVNAFYSSLENSIQFPAGILQGHFFNAQRPKYMNFGAIGYVIGHEITHGFDDQGRQFDVKGNLRDWWHPDTQKAYLAKAKCIIEQYGNYTERATGLNLNGINTQGENIADNGGVKESYIAYRRWAEKHGPEAKLPGLDYTPEQMFWVAAGQTWCAKYRKESLKMRITTGVHSPSEFRVLGSLSNMKDFAKDFHCPEGSPMNPVQKCEVW.

The Cytoplasmic segment spans residues 1 to 20 (MQTVIQNPNWWRRRNKLEKS). The helical; Signal-anchor for type II membrane protein transmembrane segment at 21 to 41 (LLVSLGIMFVVLATGFGLWIG) threads the bilayer. Topologically, residues 42–774 (KVLRTSPPSN…MNPVQKCEVW (733 aa)) are extracellular. The interval 50–79 (SNPQATALHGDSTTINQVPTGTASKGKSGD) is disordered. Residues 60-74 (DSTTINQVPTGTASK) are compositionally biased toward polar residues. One can recognise a Peptidase M13 domain in the interval 83–774 (VCLTQECIHT…MNPVQKCEVW (692 aa)). 5 disulfides stabilise this stretch: Cys-84-Cys-89, Cys-107-Cys-759, Cys-115-Cys-719, Cys-171-Cys-424, and Cys-646-Cys-771. N-linked (GlcNAc...) asparagine glycosylation is found at Asn-173, Asn-239, Asn-264, Asn-305, Asn-315, Asn-358, and Asn-554. A Zn(2+)-binding site is contributed by His-609. Glu-610 is an active-site residue. Position 613 (His-613) interacts with Zn(2+). Asn-653 is a glycosylation site (N-linked (GlcNAc...) asparagine). Glu-671 serves as a coordination point for Zn(2+). Asp-675 (proton donor) is an active-site residue.

The protein belongs to the peptidase M13 family. Zn(2+) is required as a cofactor. Post-translationally, N-glycosylated. The soluble form is probably produced by proteolytic cleavage. As to expression, detected in the stellate cells in the main segment and the bar-shaped cells in the initial segment of male and female Malpighian tubules (at protein level). Expressed in the spermatheca (at protein level). Expressed in the somatic cyst cells of the testes, with increased expression at the tail end of elongating cysts. Expressed in the ovaries with strong expression in the posterior polar cells and in border cells of stage 8, 9, and 10 follicles. In adults and third-instar larvae, expressed in the brain, ventral ganglion, and stellate cells. Also expressed in the foregut and the imaginal disks (eye, antennal and leg) of third-instar larvae. In stage 17 embryos, expressed in the tracheal system, foregut, hindgut and epidermis. Also expressed in the stellate cell progenitors of the caudal visceral mesoderm in embryos.

Its subcellular location is the cell membrane. The protein resides in the secreted. It carries out the reaction Preferential cleavage of polypeptides between hydrophobic residues, particularly with Phe or Tyr at P1'.. In terms of biological role, metalloendoprotease which cleaves peptides such as tachykinin peptide TK-2 at the amino side of hydrophobic residues. Functions in female fertility, embryogenesis and memory formation. Required in females for normal patterns of egg laying, probably due to its function in sperm retention and preventing sperm displacement by rival ejaculates. Also required for normal patterns of hatching due to its important role in early embryonic development. Required in the dorsal paired medial neurons for the proper formation of middle-term memory. Also required in the mushroom body neurons where it functions redundantly with neprilysins Nep3 and Nep4 in normal long-term memory formation. The polypeptide is Neprilysin-2 (Drosophila melanogaster (Fruit fly)).